Consider the following 34-residue polypeptide: Photosystem II reaction center protein M (34 aa).

The chain crosses the membrane as a helical span at residues 5 to 25 (ILAFIATALFILIPTSFLLII).

It belongs to the PsbM family. PSII is composed of 1 copy each of membrane proteins PsbA, PsbB, PsbC, PsbD, PsbE, PsbF, PsbH, PsbI, PsbJ, PsbK, PsbL, PsbM, PsbT, PsbX, PsbY, PsbZ, Psb30/Ycf12, at least 3 peripheral proteins of the oxygen-evolving complex and a large number of cofactors. It forms dimeric complexes. Detected in both etioplasts and green leaves; PSII is only assembled in green leaves.

The protein resides in the plastid. It localises to the chloroplast thylakoid membrane. Its function is as follows. One of the components of the core complex of photosystem II (PSII). PSII is a light-driven water:plastoquinone oxidoreductase that uses light energy to abstract electrons from H(2)O, generating O(2) and a proton gradient subsequently used for ATP formation. It consists of a core antenna complex that captures photons, and an electron transfer chain that converts photonic excitation into a charge separation. This subunit is found at the monomer-monomer interface. The chain is Photosystem II reaction center protein M from Hordeum vulgare (Barley).